A 257-amino-acid chain; its full sequence is 3-deoxy-manno-octulosonate cytidylyltransferase (257 aa).

This sequence belongs to the KdsB family.

Its subcellular location is the cytoplasm. It carries out the reaction 3-deoxy-alpha-D-manno-oct-2-ulosonate + CTP = CMP-3-deoxy-beta-D-manno-octulosonate + diphosphate. It functions in the pathway nucleotide-sugar biosynthesis; CMP-3-deoxy-D-manno-octulosonate biosynthesis; CMP-3-deoxy-D-manno-octulosonate from 3-deoxy-D-manno-octulosonate and CTP: step 1/1. Its pathway is bacterial outer membrane biogenesis; lipopolysaccharide biosynthesis. Functionally, activates KDO (a required 8-carbon sugar) for incorporation into bacterial lipopolysaccharide in Gram-negative bacteria. The chain is 3-deoxy-manno-octulosonate cytidylyltransferase from Stenotrophomonas maltophilia (strain R551-3).